We begin with the raw amino-acid sequence, 337 residues long: Anthranilate phosphoribosyltransferase (337 aa).

Residues Gly-82, 85–86 (GD), Thr-90, 92–95 (NIST), 110–118 (KHGGRSVSS), and Ser-122 each bind 5-phospho-alpha-D-ribose 1-diphosphate. Position 82 (Gly-82) interacts with anthranilate. Ser-94 serves as a coordination point for Mg(2+). Arg-168 is an anthranilate binding site. Mg(2+)-binding residues include Asp-226 and Glu-227.

This sequence belongs to the anthranilate phosphoribosyltransferase family. Homodimer. Mg(2+) is required as a cofactor.

The enzyme catalyses N-(5-phospho-beta-D-ribosyl)anthranilate + diphosphate = 5-phospho-alpha-D-ribose 1-diphosphate + anthranilate. Its pathway is amino-acid biosynthesis; L-tryptophan biosynthesis; L-tryptophan from chorismate: step 2/5. Functionally, catalyzes the transfer of the phosphoribosyl group of 5-phosphorylribose-1-pyrophosphate (PRPP) to anthranilate to yield N-(5'-phosphoribosyl)-anthranilate (PRA). This Francisella tularensis subsp. novicida (strain U112) protein is Anthranilate phosphoribosyltransferase.